Here is a 788-residue protein sequence, read N- to C-terminus: Phosphoribosylformylglycinamidine synthase subunit PurL (788 aa).

His50 is an active-site residue. Positions 53 and 92 each coordinate ATP. Glu94 contacts Mg(2+). Residues 95–98 (SHNH) and Arg117 contribute to the substrate site. Catalysis depends on His96, which acts as the Proton acceptor. Position 118 (Asp118) interacts with Mg(2+). Substrate is bound at residue Gln241. Residue Asp269 participates in Mg(2+) binding. 313–315 (ESQ) is a substrate binding site. Asp524 and Gly561 together coordinate ATP. Asn562 contacts Mg(2+). Ser564 contacts substrate.

It belongs to the FGAMS family. As to quaternary structure, monomer. Part of the FGAM synthase complex composed of 1 PurL, 1 PurQ and 2 PurS subunits.

The protein localises to the cytoplasm. The catalysed reaction is N(2)-formyl-N(1)-(5-phospho-beta-D-ribosyl)glycinamide + L-glutamine + ATP + H2O = 2-formamido-N(1)-(5-O-phospho-beta-D-ribosyl)acetamidine + L-glutamate + ADP + phosphate + H(+). It functions in the pathway purine metabolism; IMP biosynthesis via de novo pathway; 5-amino-1-(5-phospho-D-ribosyl)imidazole from N(2)-formyl-N(1)-(5-phospho-D-ribosyl)glycinamide: step 1/2. Part of the phosphoribosylformylglycinamidine synthase complex involved in the purines biosynthetic pathway. Catalyzes the ATP-dependent conversion of formylglycinamide ribonucleotide (FGAR) and glutamine to yield formylglycinamidine ribonucleotide (FGAM) and glutamate. The FGAM synthase complex is composed of three subunits. PurQ produces an ammonia molecule by converting glutamine to glutamate. PurL transfers the ammonia molecule to FGAR to form FGAM in an ATP-dependent manner. PurS interacts with PurQ and PurL and is thought to assist in the transfer of the ammonia molecule from PurQ to PurL. The sequence is that of Phosphoribosylformylglycinamidine synthase subunit PurL from Nostoc punctiforme (strain ATCC 29133 / PCC 73102).